Here is a 113-residue protein sequence, read N- to C-terminus: uncharacterized protein (113 aa).

A signal peptide spans 1–20 (MMKKSILAFLLLTSSAAALA).

This is an uncharacterized protein from Escherichia coli (strain K12).